The following is a 512-amino-acid chain: Beta-glucosidase 44 (512 aa).

Residues 1–23 (MRHLSSPPWPLLLLLLLSSFTSG) form the signal peptide. Glutamine 58 contributes to the a beta-D-glucoside binding site. An N-linked (GlcNAc...) asparagine glycan is attached at asparagine 86. A beta-D-glucoside-binding positions include histidine 159 and 204–205 (NE). Catalysis depends on glutamate 205, which acts as the Proton donor. Cysteine 224 and cysteine 231 are disulfide-bonded. Asparagine 230 carries an N-linked (GlcNAc...) asparagine glycan. Tyrosine 347 and glutamate 419 together coordinate a beta-D-glucoside. The active-site Nucleophile is the glutamate 419. Asparagine 427 carries N-linked (GlcNAc...) asparagine glycosylation. A beta-D-glucoside contacts are provided by residues tryptophan 466, 473 to 474 (EW), and phenylalanine 482.

Belongs to the glycosyl hydrolase 1 family. As to quaternary structure, homodimer.

It localises to the secreted. The enzyme catalyses Hydrolysis of terminal, non-reducing beta-D-glucosyl residues with release of beta-D-glucose.. Hydrolyzes p-nitrophenyl beta-D-glucoside, p-nitrophenyl beta-D-mannoside, cellobiose, 4-methylumbelliferyl-beta-D-glucoside, laminarin, amygdalin, esculin and gentiobiose. This chain is Beta-glucosidase 44, found in Arabidopsis thaliana (Mouse-ear cress).